The primary structure comprises 1232 residues: Dynactin subunit 1 (1232 aa).

In terms of domain architecture, CAP-Gly spans 31–73 (GATLFATGKWVGVILDDSKGKNDGTVQGRRYFTCEENHGIFVR). 2 disordered regions span residues 82 to 183 (DGAD…AQVK) and 339 to 358 (SASEKQEHIKVQKQMEKKNT). The span at 86-95 (TTSPETPEPT) shows a compositional bias: low complexity. Residues 108–117 (PKSSKLPTRP) show a composition bias toward polar residues. Low complexity predominate over residues 118–130 (SSSAASSGTASAS). A compositionally biased stretch (polar residues) spans 133–144 (EISSSEPSTPAQ). Low complexity predominate over residues 146–163 (PLAAPIIPSPSSAITSPV). Coiled coils occupy residues 170-505 (GPSK…KEQQ), 908-1005 (ETVI…RTIE), 1046-1071 (LLLQQIDALRLSMKHLKHENNKLKAH), and 1136-1166 (AAQLLEQTARLKSLSDTIDKLKNEVMKETVS). The segment covering 172-183 (SKEEENLRAQVK) has biased composition (basic and acidic residues).

The protein belongs to the dynactin 150 kDa subunit family. Monomer and homodimer. Subunit of dynactin, a multiprotein complex part of a tripartite complex with dynein and a adapter, such as BICDL1, BICD2 or HOOK3. The dynactin complex is built around ACTR1A/ACTB filament and consists of an actin-related filament composed of a shoulder domain, a pointed end and a barbed end. Its length is defined by its flexible shoulder domain. The soulder is composed of 2 DCTN1 subunits, 4 DCTN2 and 2 DCTN3. DCTN1/p150(glued) binds directly to microtubules and to cytoplasmic dynein.

The protein localises to the cytoplasm. The protein resides in the cytoskeleton. It localises to the microtubule organizing center. It is found in the centrosome. Its subcellular location is the centriole. The protein localises to the spindle. The protein resides in the cell cortex. Part of the dynactin complex that activates the molecular motor dynein for ultra-processive transport along microtubules. Plays a key role in dynein-mediated retrograde transport of vesicles and organelles along microtubules by recruiting and tethering dynein to microtubules. Binds to both dynein and microtubules providing a link between specific cargos, microtubules and dynein. Essential for targeting dynein to microtubule plus ends, recruiting dynein to membranous cargos and enhancing dynein processivity (the ability to move along a microtubule for a long distance without falling off the track). Can also act as a brake to slow the dynein motor during motility along the microtubule. Can regulate microtubule stability by promoting microtubule formation, nucleation and polymerization and by inhibiting microtubule catastrophe in neurons. Inhibits microtubule catastrophe by binding both to microtubules and to tubulin, leading to enhanced microtubule stability along the axon. Plays a role in metaphase spindle orientation. Plays a role in centriole cohesion and subdistal appendage organization and function. Its recruitment to the centriole in a KIF3A-dependent manner is essential for the maintenance of centriole cohesion and the formation of subdistal appendage. Also required for microtubule anchoring at the mother centriole. Plays a role in primary cilia formation. The polypeptide is Dynactin subunit 1 (dctn1) (Xenopus laevis (African clawed frog)).